The primary structure comprises 240 residues: Probable transcriptional regulatory protein OEOE_0768 (240 aa).

The tract at residues 1-21 (MSGHSKWHNIQGRKNAQDAKR) is disordered.

It belongs to the TACO1 family.

Its subcellular location is the cytoplasm. In Oenococcus oeni (strain ATCC BAA-331 / PSU-1), this protein is Probable transcriptional regulatory protein OEOE_0768.